The primary structure comprises 75 residues: Kappa-thalatoxin-Cad2a (75 aa).

The first 22 residues, 1–22 (MKFQMIAAVLLIAFCLCVVVTA), serve as a signal peptide directing secretion. Residues 23–40 (RMELQDVEDMKNGSFQKR) constitute a propeptide that is removed on maturation. The region spanning 43–75 (CIDTIPKSRCTAFQCKNSMKYRLSFCRKTCGTC) is the ShKT domain. 3 disulfides stabilise this stretch: C43/C75, C52/C68, and C57/C72.

This sequence belongs to the sea anemone type 1 potassium channel toxin family. Type 1a subfamily.

Its subcellular location is the secreted. It is found in the nematocyst. Its function is as follows. Inhibits voltage-gated potassium channels (Kv) with higher potency for Kv1.1/KCNA1 and Kv1.3/KCNA3. The chain is Kappa-thalatoxin-Cad2a from Cryptodendrum adhaesivum (Adhesive sea anemone).